We begin with the raw amino-acid sequence, 396 residues long: MELPRLENVDLSGKRVFLRVDFNVPVENGKVTDKTRIEKTLPTIELLIKKGARIIIASHLGRPKGQVNPEFSLAPVVETFQSLVKSKVYFSKTVIGEDAIKLSKELKNGEILVIENVRFHKEEEENDPGFSKKLSALADIYVNDAFGAAHRAHSSTEGIARLLPAYAGLLMHKEILELSALLHKPARPFVAIIGGSKVSTKIKVLTNLFDKVNHLLIGGGMAYTFLKSRAIPIGNSLVEKEFEVQAFQLIEKAGVAGIDLQLPVDHIIGDQFNEKAKTKSVDKMGILDGWMGMDIGSKTVSNYEKIIKNAGTIFWNGPMGVFEMDKFASGTMAIAKAVAKSKAKTVVGGGDSIAAINKAGVADKITHISTGGGASLEFMEGRKLPGVEALKKKTSE.

Substrate contacts are provided by residues 21–23, arginine 36, 59–62, arginine 118, and arginine 151; these read DFN and HLGR. ATP is bound by residues lysine 201, glycine 292, glutamate 323, and 349–352; that span reads GGDS.

This sequence belongs to the phosphoglycerate kinase family. As to quaternary structure, monomer.

Its subcellular location is the cytoplasm. The enzyme catalyses (2R)-3-phosphoglycerate + ATP = (2R)-3-phospho-glyceroyl phosphate + ADP. Its pathway is carbohydrate degradation; glycolysis; pyruvate from D-glyceraldehyde 3-phosphate: step 2/5. The polypeptide is Phosphoglycerate kinase (Leptospira interrogans serogroup Icterohaemorrhagiae serovar Lai (strain 56601)).